A 364-amino-acid chain; its full sequence is 3-isopropylmalate dehydrogenase (364 aa).

Residue 79-90 participates in NAD(+) binding; it reads GPKWGTGSVRPE. Residues Arg97, Arg107, Arg136, and Asp225 each coordinate substrate. 3 residues coordinate Mg(2+): Asp225, Asp250, and Asp254. Residue 289–300 participates in NAD(+) binding; the sequence is GSAPDLPKNKVN.

The protein belongs to the isocitrate and isopropylmalate dehydrogenases family. In terms of assembly, homodimer. Requires Mg(2+) as cofactor. The cofactor is Mn(2+).

The protein resides in the cytoplasm. The catalysed reaction is (2R,3S)-3-isopropylmalate + NAD(+) = 4-methyl-2-oxopentanoate + CO2 + NADH. It functions in the pathway amino-acid biosynthesis; L-leucine biosynthesis; L-leucine from 3-methyl-2-oxobutanoate: step 3/4. In terms of biological role, catalyzes the oxidation of 3-carboxy-2-hydroxy-4-methylpentanoate (3-isopropylmalate) to 3-carboxy-4-methyl-2-oxopentanoate. The product decarboxylates to 4-methyl-2 oxopentanoate. This is 3-isopropylmalate dehydrogenase (LEU2) from Saccharomyces cerevisiae (strain ATCC 204508 / S288c) (Baker's yeast).